A 170-amino-acid polypeptide reads, in one-letter code: Calcineurin subunit B type 2 (170 aa).

Gly-2 is lipidated: N-myristoyl glycine. EF-hand domains follow at residues 18–46 (DEIK…FTSM), 50–85 (QENP…FSVR), 87–122 (DEEQ…MVGD), and 128–163 (QLQQ…LEIH). Residues Asp-63, Asp-65, Asp-67, Gln-69, Glu-74, Asp-100, Asp-102, Asp-104, Tyr-106, and Glu-111 each contribute to the Ca(2+) site. Residues 131–136 (QLVDKT) form a calcineurin A binding region. Asp-141, Asp-143, Asp-145, Lys-147, and Glu-152 together coordinate Ca(2+).

The protein belongs to the calcineurin regulatory subunit family. As to quaternary structure, forms a complex composed of a calmodulin-dependent catalytic subunit (also known as calcineurin A) and a regulatory Ca(2+)-binding subunit (also known as calcineurin B). There are three catalytic subunits, each encoded by a separate gene (PPP3CA, PPP3CB, and PPP3CC) and two regulatory subunits which are also encoded by separate genes (PPP3R1 and PPP3R2). Interacts with SPATA33 (via PQIIIT motif).

Its subcellular location is the mitochondrion. Functionally, regulatory subunit of calcineurin, a calcium-dependent, calmodulin stimulated protein phosphatase. Confers calcium sensitivity. This chain is Calcineurin subunit B type 2 (PPP3R2), found in Bos taurus (Bovine).